The chain runs to 794 residues: Protocadherin beta-6 (794 aa).

A signal peptide spans 1–27 (MMQTKVQNKKRQVAFFILLMLWGEVGS). Residues 28-688 (ESIQYSVLEE…AQADSLTVYL (661 aa)) lie on the Extracellular side of the membrane. 5 consecutive Cadherin domains span residues 34-132 (VLEE…APEF), 137-241 (MLLK…VPEF), 246-345 (YEAQ…APEL), 350-449 (FISL…APAF), and 454-559 (YTLF…SPFV). Asparagine 46 carries N-linked (GlcNAc...) asparagine glycosylation. Cysteine 95 and cysteine 101 form a disulfide bridge. Asparagine 183 carries N-linked (GlcNAc...) asparagine glycosylation. An N-linked (GlcNAc...) asparagine glycan is attached at asparagine 416. Asparagine 565 carries N-linked (GlcNAc...) asparagine glycosylation. The 104-residue stretch at 566 to 669 (GSAPCTELVP…LVDGFSQPYL (104 aa)) folds into the Cadherin 6 domain. Residues 689–709 (VVALASVSSLFLFSVLLFVAV) form a helical membrane-spanning segment. Topologically, residues 710-794 (RLCRRSRAAS…PTSRNSFPFS (85 aa)) are cytoplasmic. Positions 773–794 (PPQGTEREMEETPTSRNSFPFS) are disordered. Over residues 784-794 (TPTSRNSFPFS) the composition is skewed to polar residues.

As to quaternary structure, forms homodimers in trans (molecules expressed by two different cells). Forms promiscuous heterodimers in cis (at the plasma membrane of the same cell) with other protocadherins.

The protein resides in the cell membrane. Its function is as follows. Calcium-dependent cell-adhesion protein involved in cells self-recognition and non-self discrimination. Thereby, it is involved in the establishment and maintenance of specific neuronal connections in the brain. In Homo sapiens (Human), this protein is Protocadherin beta-6.